Reading from the N-terminus, the 163-residue chain is Transcriptional repressor NrdR (163 aa).

A zinc finger lies at 3–34 (CVQCGHLEDKVIDSRMSKDGTTIRRRRVCLRC). The ATP-cone domain occupies 49–139 (LRVVKRDNLR…VYRQFSNVEE (91 aa)).

It belongs to the NrdR family. Zn(2+) serves as cofactor.

Negatively regulates transcription of bacterial ribonucleotide reductase nrd genes and operons by binding to NrdR-boxes. The chain is Transcriptional repressor NrdR from Akkermansia muciniphila (strain ATCC BAA-835 / DSM 22959 / JCM 33894 / BCRC 81048 / CCUG 64013 / CIP 107961 / Muc).